The following is a 190-amino-acid chain: Segregation and condensation protein B (190 aa).

It belongs to the ScpB family. In terms of assembly, homodimer. Homodimerization may be required to stabilize the binding of ScpA to the Smc head domains. Component of a cohesin-like complex composed of ScpA, ScpB and the Smc homodimer, in which ScpA and ScpB bind to the head domain of Smc. The presence of the three proteins is required for the association of the complex with DNA.

The protein resides in the cytoplasm. In terms of biological role, participates in chromosomal partition during cell division. May act via the formation of a condensin-like complex containing Smc and ScpA that pull DNA away from mid-cell into both cell halves. The chain is Segregation and condensation protein B from Alkaliphilus metalliredigens (strain QYMF).